The primary structure comprises 301 residues: UDP-N-acetylenolpyruvoylglucosamine reductase (301 aa).

The region spanning 30–194 (VGGEADYLVF…LSVKFALAPG (165 aa)) is the FAD-binding PCMH-type domain. Arginine 173 is an active-site residue. Catalysis depends on serine 223, which acts as the Proton donor. The active site involves glutamate 293.

Belongs to the MurB family. FAD serves as cofactor.

Its subcellular location is the cytoplasm. The enzyme catalyses UDP-N-acetyl-alpha-D-muramate + NADP(+) = UDP-N-acetyl-3-O-(1-carboxyvinyl)-alpha-D-glucosamine + NADPH + H(+). Its pathway is cell wall biogenesis; peptidoglycan biosynthesis. Cell wall formation. The chain is UDP-N-acetylenolpyruvoylglucosamine reductase from Streptococcus pneumoniae (strain Hungary19A-6).